Here is a 258-residue protein sequence, read N- to C-terminus: Deoxyribose-phosphate aldolase (258 aa).

The active-site Proton donor/acceptor is Asp102. Residue Lys165 is the Schiff-base intermediate with acetaldehyde of the active site. Lys199 serves as the catalytic Proton donor/acceptor.

The protein belongs to the DeoC/FbaB aldolase family. DeoC type 2 subfamily.

It is found in the cytoplasm. The catalysed reaction is 2-deoxy-D-ribose 5-phosphate = D-glyceraldehyde 3-phosphate + acetaldehyde. It participates in carbohydrate degradation; 2-deoxy-D-ribose 1-phosphate degradation; D-glyceraldehyde 3-phosphate and acetaldehyde from 2-deoxy-alpha-D-ribose 1-phosphate: step 2/2. Functionally, catalyzes a reversible aldol reaction between acetaldehyde and D-glyceraldehyde 3-phosphate to generate 2-deoxy-D-ribose 5-phosphate. This Vibrio vulnificus (strain CMCP6) protein is Deoxyribose-phosphate aldolase.